Here is a 423-residue protein sequence, read N- to C-terminus: MSASAVYVLDLKGKVLICRNYRGDVDMSEVEHFMPILMEKEEEGMLSPILAHGGVRFMWIKHNNLYLVATSKKNACVSLVFSFLYKVVQVFSEYFKELEEESIRDNFVIIYELLDELMDFGYPQTTDSKILQEYITQEGHKLETGAPRPPATVTNAVSWRSEGIKYRKNEVFLDVIESVNLLVSANGNVLRSEIVGSIKMRVFLSGMPELRLGLNDKVLFDNTGRGKSKSVELEDVKFHQCVRLSRFENDRTISFIPPDGEFELMSYRLNTHVKPLIWIESVIEKHSHSRIEYMIKAKSQFKRRSTANNVEIHIPVPNDADSPKFKTTVGSVKWVPENSEIVWSIKSFPGGKEYLMRAHFGLPSVEAEDKEGKPPISVKFEIPYFTTSGIQVRYLKIIEKSGYQALPWVRYITQNGDYQLRTQ.

S2 is subject to N-acetylserine. T152, T154, and T223 each carry phosphothreonine. In terms of domain architecture, MHD spans 168–421 (KNEVFLDVIE…ITQNGDYQLR (254 aa)).

The protein belongs to the adaptor complexes medium subunit family. Adaptor protein complex 1 (AP-1) is a heterotetramer composed of two large adaptins (gamma-type subunit AP1G1 and beta-type subunit AP1B1), a medium adaptin (mu-type subunit AP1M1 or AP1M2) and a small adaptin (sigma-type subunit AP1S1 or AP1S2 or AP1S3). Interacts with MARCHF11. Post-translationally, phosphorylation of membrane-bound AP1M1/AP1M2 increases its affinity for sorting signals.

It localises to the cytoplasmic vesicle. Its subcellular location is the clathrin-coated vesicle membrane. The protein localises to the golgi apparatus. Functionally, subunit of clathrin-associated adaptor protein complex 1 that plays a role in protein sorting in the trans-Golgi network (TGN) and endosomes. The AP complexes mediate the recruitment of clathrin to membranes and the recognition of sorting signals within the cytosolic tails of transmembrane cargo molecules. This chain is AP-1 complex subunit mu-1, found in Bos taurus (Bovine).